A 56-amino-acid chain; its full sequence is Small ribosomal subunit protein uS14 (56 aa).

Residues Cys21, Cys24, Cys39, and Cys42 each coordinate Zn(2+).

The protein belongs to the universal ribosomal protein uS14 family. As to quaternary structure, component of the small ribosomal subunit (SSU). Mature N.crassa ribosomes consist of a small (40S) and a large (60S) subunit. The 40S small subunit contains 1 molecule of ribosomal RNA (18S rRNA) and at least 32 different proteins. The large 60S subunit contains 3 rRNA molecules (26S, 5.8S and 5S rRNA) and at least 42 different proteins. Requires Zn(2+) as cofactor.

It is found in the cytoplasm. In terms of biological role, component of the ribosome, a large ribonucleoprotein complex responsible for the synthesis of proteins in the cell. The small ribosomal subunit (SSU) binds messenger RNAs (mRNAs) and translates the encoded message by selecting cognate aminoacyl-transfer RNA (tRNA) molecules. The large subunit (LSU) contains the ribosomal catalytic site termed the peptidyl transferase center (PTC), which catalyzes the formation of peptide bonds, thereby polymerizing the amino acids delivered by tRNAs into a polypeptide chain. The nascent polypeptides leave the ribosome through a tunnel in the LSU and interact with protein factors that function in enzymatic processing, targeting, and the membrane insertion of nascent chains at the exit of the ribosomal tunnel. The polypeptide is Small ribosomal subunit protein uS14 (rps-29) (Neurospora crassa (strain ATCC 24698 / 74-OR23-1A / CBS 708.71 / DSM 1257 / FGSC 987)).